Here is a 340-residue protein sequence, read N- to C-terminus: Large ribosomal subunit protein uL29m (340 aa).

Residues 1–10 show a composition bias toward polar residues; that stretch reads MIRSLHTSAV. The segment at 1–22 is disordered; that stretch reads MIRSLHTSAVRQGRKKWPKPLP.

Belongs to the universal ribosomal protein uL29 family. In terms of assembly, component of the mitochondrial large ribosomal subunit. Mature mitochondrial ribosomes consist of a small (37S) and a large (54S) subunit. The 37S subunit contains at least 33 different proteins and 1 molecule of RNA (15S). The 54S subunit contains at least 45 different proteins and 1 molecule of RNA (21S).

The protein resides in the mitochondrion. The chain is Large ribosomal subunit protein uL29m (MRPL4) from Yarrowia lipolytica (strain CLIB 122 / E 150) (Yeast).